A 253-amino-acid chain; its full sequence is 5'-nucleotidase SurE (253 aa).

4 residues coordinate a divalent metal cation: Asp8, Asp9, Ser39, and Asn95.

It belongs to the SurE nucleotidase family. A divalent metal cation serves as cofactor.

It is found in the cytoplasm. It catalyses the reaction a ribonucleoside 5'-phosphate + H2O = a ribonucleoside + phosphate. Its function is as follows. Nucleotidase that shows phosphatase activity on nucleoside 5'-monophosphates. This chain is 5'-nucleotidase SurE, found in Kosmotoga olearia (strain ATCC BAA-1733 / DSM 21960 / TBF 19.5.1).